We begin with the raw amino-acid sequence, 444 residues long: Phosphoglucosamine mutase (444 aa).

Residue Ser-99 is the Phosphoserine intermediate of the active site. Positions 99, 242, 244, and 246 each coordinate Mg(2+). Ser-99 bears the Phosphoserine mark.

Belongs to the phosphohexose mutase family. Mg(2+) is required as a cofactor. Activated by phosphorylation.

It catalyses the reaction alpha-D-glucosamine 1-phosphate = D-glucosamine 6-phosphate. Catalyzes the conversion of glucosamine-6-phosphate to glucosamine-1-phosphate. The protein is Phosphoglucosamine mutase of Aliarcobacter butzleri (strain RM4018) (Arcobacter butzleri).